A 256-amino-acid polypeptide reads, in one-letter code: Imidazole glycerol phosphate synthase subunit HisF (256 aa).

Active-site residues include Asp12 and Asp131.

This sequence belongs to the HisA/HisF family. As to quaternary structure, heterodimer of HisH and HisF.

It localises to the cytoplasm. It carries out the reaction 5-[(5-phospho-1-deoxy-D-ribulos-1-ylimino)methylamino]-1-(5-phospho-beta-D-ribosyl)imidazole-4-carboxamide + L-glutamine = D-erythro-1-(imidazol-4-yl)glycerol 3-phosphate + 5-amino-1-(5-phospho-beta-D-ribosyl)imidazole-4-carboxamide + L-glutamate + H(+). It participates in amino-acid biosynthesis; L-histidine biosynthesis; L-histidine from 5-phospho-alpha-D-ribose 1-diphosphate: step 5/9. In terms of biological role, IGPS catalyzes the conversion of PRFAR and glutamine to IGP, AICAR and glutamate. The HisF subunit catalyzes the cyclization activity that produces IGP and AICAR from PRFAR using the ammonia provided by the HisH subunit. The chain is Imidazole glycerol phosphate synthase subunit HisF from Pseudomonas fluorescens (strain ATCC BAA-477 / NRRL B-23932 / Pf-5).